A 347-amino-acid chain; its full sequence is NADH-ubiquinone oxidoreductase chain 2 (347 aa).

A run of 11 helical transmembrane segments spans residues Met1–Leu21, His25–Met45, Met68–Ile88, Met96–Pro116, Val122–Leu142, Ile145–Gly165, Ile178–Pro198, Ser201–Ile221, Ile239–Gly259, Ser274–Met294, and Met326–Leu346.

It belongs to the complex I subunit 2 family. Core subunit of respiratory chain NADH dehydrogenase (Complex I) which is composed of 45 different subunits. Interacts with TMEM242.

Its subcellular location is the mitochondrion inner membrane. The enzyme catalyses a ubiquinone + NADH + 5 H(+)(in) = a ubiquinol + NAD(+) + 4 H(+)(out). Core subunit of the mitochondrial membrane respiratory chain NADH dehydrogenase (Complex I) which catalyzes electron transfer from NADH through the respiratory chain, using ubiquinone as an electron acceptor. Essential for the catalytic activity and assembly of complex I. The polypeptide is NADH-ubiquinone oxidoreductase chain 2 (Sylvisorex lunaris (Moon forest shrew)).